The chain runs to 607 residues: Ceramide kinase (607 aa).

In terms of domain architecture, DAGKc spans 135 to 358; sequence DRPKSLMVFV…LDIAQVVRWK (224 aa). ATP is bound by residues 145–149, Thr-176, and 205–211; these read HPLCG and GDGLFNE. 204–207 lines the substrate pocket; it reads GGDG. Asp-206 (proton donor/acceptor) is an active-site residue. Residues 247–297 are disordered; that stretch reads NDLSNSELTGDDANAISGSSNTPDDHEPLLSTTRSTGLDISSSDSSDEPCN. Over residues 276–286 the composition is skewed to polar residues; it reads LSTTRSTGLDI. Ser-320 provides a ligand contact to ATP. The short motif at 454–461 is the CXXXCXXC element; the sequence is CRTNCLIC.

The cofactor is Ca(2+). It depends on Mg(2+) as a cofactor. As to expression, highly expressed in leaves and at lower levels in stems.

It carries out the reaction an N-acylsphing-4-enine + ATP = an N-acylsphing-4-enine 1-phosphate + ADP + H(+). Its function is as follows. Catalyzes specifically the phosphorylation of ceramide to form ceramide 1-phosphate. Possesses activity on ceramide analog (C6 synthetic ceramide) in vitro. Ceramide is a critical sphingolipid metabolite that induces programmed cell death (PCD) in plants and ceramide-1-phosphate has a PCD suppressive effect. Thus, ceramide phosphorylation plays a role in the modulation of PCD and CERK activity is crucial for the maintenance of cell viability. The sequence is that of Ceramide kinase (CERK) from Oryza sativa subsp. japonica (Rice).